The chain runs to 439 residues: MFNNSIHKVSICIALTLTFSANAMAVTEIPFWHSMEGELGKEVDSIADRFNQSQPDYKIVPVYKGNYEQSLAAGIAAFRSGKAPAILQVYEVGTATMMASKAIKPVYQVFKDANIDFDESVFVPTVAGYYTDSKTGRLLSQPFNSSTPVLYYNKEAFKKAGLDPEQPPKTWQELAADTAKLRAAGSSCGYASGWQGWIQIENFSAWHGQPIASRNNGFDGTDAVLEFNKPLQVKHIQLLSDMNKKGDFTYFGRKDESTSKFYNGDCAITTASSGSLASIRHYAKFNFGVGMMPYDADAKNAPQNAIIGGASLWVMDGKDKETYKGVAEFLQYLVKPEIAAEWHQKTGYLPITTAAYELTKQQGFYEQNPGADVATRQMLNKPPLPYTKGLRLGNMPQIRTVVDEELEAVWTAKKTPQAALDNSVKRGDVLLRRFEQANK.

The first 25 residues, 1-25 (MFNNSIHKVSICIALTLTFSANAMA), serve as a signal peptide directing secretion. Residues Tyr67, Glu91, Ser146, Ser272, Gly309, Tyr348, and Arg399 each contribute to the sn-glycerol 3-phosphate site.

Belongs to the bacterial solute-binding protein 1 family. As to quaternary structure, the complex is composed of two ATP-binding proteins (UgpC), two transmembrane proteins (UgpA and UgpE) and a solute-binding protein (UgpB).

Its subcellular location is the periplasm. Functionally, part of the ABC transporter complex UgpBAEC involved in sn-glycerol-3-phosphate (G3P) import. Binds G3P. This Yersinia pestis bv. Antiqua (strain Antiqua) protein is sn-glycerol-3-phosphate-binding periplasmic protein UgpB (ugpB).